A 147-amino-acid chain; its full sequence is Hemoglobin subunit epsilon (147 aa).

Residues 3–147 (HFTAEEKSTI…VATALAHKYH (145 aa)) enclose the Globin domain. A phosphoserine mark is found at Ser14 and Ser51. Residues His64 and His93 each coordinate heme b.

The protein belongs to the globin family. In terms of assembly, heterotetramer of two alpha chains and two epsilon chains in early embryonic hemoglobin Gower-2; two zeta chains and two epsilon chains in early embryonic hemoglobin Gower-1. In terms of tissue distribution, red blood cells.

Its function is as follows. The epsilon chain is a beta-type chain of early mammalian embryonic hemoglobin. This is Hemoglobin subunit epsilon (HBE1) from Microcebus murinus (Gray mouse lemur).